The chain runs to 648 residues: Threonine--tRNA ligase (648 aa).

Residues 1–61 form the TGS domain; that stretch reads MINITFPDGA…DTDGSIEIVT (61 aa). Residues 242-540 form a catalytic region; sequence DHRKLGKELD…LIETYKGAFP (299 aa). Zn(2+) is bound by residues cysteine 336, histidine 387, and histidine 517.

It belongs to the class-II aminoacyl-tRNA synthetase family. Homodimer. Zn(2+) is required as a cofactor.

The protein localises to the cytoplasm. It catalyses the reaction tRNA(Thr) + L-threonine + ATP = L-threonyl-tRNA(Thr) + AMP + diphosphate + H(+). In terms of biological role, catalyzes the attachment of threonine to tRNA(Thr) in a two-step reaction: L-threonine is first activated by ATP to form Thr-AMP and then transferred to the acceptor end of tRNA(Thr). Also edits incorrectly charged L-seryl-tRNA(Thr). The chain is Threonine--tRNA ligase from Streptococcus uberis (strain ATCC BAA-854 / 0140J).